We begin with the raw amino-acid sequence, 335 residues long: Glyceraldehyde-3-phosphate dehydrogenase (335 aa).

NAD(+) contacts are provided by residues 11 to 12 and G110; that span reads TI. 139 to 141 is a binding site for D-glyceraldehyde 3-phosphate; the sequence is SCN. C140 serves as the catalytic Nucleophile. Residue R168 coordinates NAD(+). 194–195 contributes to the D-glyceraldehyde 3-phosphate binding site; the sequence is HG. Q301 is an NAD(+) binding site.

The protein belongs to the glyceraldehyde-3-phosphate dehydrogenase family. Homotetramer.

It localises to the cytoplasm. It catalyses the reaction D-glyceraldehyde 3-phosphate + phosphate + NADP(+) = (2R)-3-phospho-glyceroyl phosphate + NADPH + H(+). The enzyme catalyses D-glyceraldehyde 3-phosphate + phosphate + NAD(+) = (2R)-3-phospho-glyceroyl phosphate + NADH + H(+). It participates in carbohydrate degradation; glycolysis; pyruvate from D-glyceraldehyde 3-phosphate: step 1/5. The sequence is that of Glyceraldehyde-3-phosphate dehydrogenase from Halobacterium salinarum (strain ATCC 29341 / DSM 671 / R1).